A 719-amino-acid polypeptide reads, in one-letter code: ATP-dependent RNA helicase SUV3 homolog, mitochondrial (719 aa).

The transit peptide at 1 to 18 directs the protein to the mitochondrion; sequence MRRASGVLRVLGGLTQRC. The segment at 16-42 is disordered; sequence QRCSTSSTPSSSRFPAMNSRRKRNSVR. A Helicase ATP-binding domain is found at 181-319; it reads EARSVTRKIF…PAAIDIVKKL (139 aa). 194–201 provides a ligand contact to ATP; it reads GPTNSGKT. A Helicase C-terminal domain is found at 343-499; the sequence is KAIESYSNIE…PTYDQIETFS (157 aa). The interval 662-692 is disordered; it reads SKAAGSSKSSEGKRENPSKSEREKPNKRSSI. A compositionally biased stretch (basic and acidic residues) spans 671 to 687; it reads SEGKRENPSKSEREKPN. Residues 693 to 717 are a coiled coil; it reads LEALLKRADISEDDLEQLREELNKN.

The protein belongs to the helicase family. It depends on Mg(2+) as a cofactor. The cofactor is Mn(2+).

The protein resides in the mitochondrion matrix. Its subcellular location is the nucleus. It catalyses the reaction ATP + H2O = ADP + phosphate + H(+). Its function is as follows. ATPase and DNA/RNA helicase able to unwind DNA/DNA, DNA/RNA and RNA/RNA duplexes in the 5'-3' direction. The chain is ATP-dependent RNA helicase SUV3 homolog, mitochondrial from Caenorhabditis elegans.